A 79-amino-acid chain; its full sequence is Protein SIP18 (79 aa).

Residues 1-79 form a disordered region; that stretch reads MSNMMNKFAE…DWKTYENMKK (79 aa). Over residues 8–20 the composition is skewed to basic and acidic residues; it reads FAEKLQGNDDSHQ.

This Saccharomyces cerevisiae (strain ATCC 204508 / S288c) (Baker's yeast) protein is Protein SIP18 (SIP18).